Consider the following 310-residue polypeptide: Sporozoite surface protein P36 (310 aa).

The signal sequence occupies residues 1–24; that stretch reads MRKALYSLLFYMCICLYIYTPVFM. 2 consecutive 6-Cys domains span residues 25-157 and 168-309; these read ANLK…IKKT and YIKG…STKA. Intrachain disulfides connect C38/C48, C62/C137, C80/C135, C172/C196, C210/C291, and C227/C289. N72, N114, and N118 each carry an N-linked (GlcNAc...) asparagine glycan. N290 is a glycosylation site (N-linked (GlcNAc...) asparagine).

The protein resides in the cell surface. The protein localises to the cell membrane. Its function is as follows. Involved in sporozoite infection of hepatocytes and replication therein. The chain is Sporozoite surface protein P36 (P36) from Plasmodium yoelii yoelii.